A 316-amino-acid chain; its full sequence is UDP-N-acetylenolpyruvoylglucosamine reductase (316 aa).

An FAD-binding PCMH-type domain is found at 30–194 (VGGEADYLVF…LSVKFALAPG (165 aa)). Arginine 173 is a catalytic residue. Serine 223 functions as the Proton donor in the catalytic mechanism. Glutamate 293 is an active-site residue.

This sequence belongs to the MurB family. FAD serves as cofactor.

It localises to the cytoplasm. The enzyme catalyses UDP-N-acetyl-alpha-D-muramate + NADP(+) = UDP-N-acetyl-3-O-(1-carboxyvinyl)-alpha-D-glucosamine + NADPH + H(+). It participates in cell wall biogenesis; peptidoglycan biosynthesis. In terms of biological role, cell wall formation. This chain is UDP-N-acetylenolpyruvoylglucosamine reductase, found in Streptococcus pneumoniae serotype 19F (strain G54).